The chain runs to 208 residues: MTKLLYITAHPLDELGSNSMAAGKTFVDSYKENHPSDEVKHIDLFNEDIPMIDKDVLTGWGKLRNGDELTSEEQQKVNRLSEILDEFLEADKYVFVSPMWNLSFPPVLKAYIDAISIAGKTFKYTAEGPQGLLTDKKVLHIQSRGGYYTEGPAAEVESGDRYLRNIMTFLGVPSYETIIIEGHNAEPEKTEEIKAASIAEAKELAKTF.

Residues 17–19 (SNS), 99–102 (MWNL), and 143–146 (SRGG) contribute to the FMN site.

It belongs to the azoreductase type 1 family. As to quaternary structure, homodimer. FMN serves as cofactor.

It carries out the reaction 2 a quinone + NADH + H(+) = 2 a 1,4-benzosemiquinone + NAD(+). The enzyme catalyses N,N-dimethyl-1,4-phenylenediamine + anthranilate + 2 NAD(+) = 2-(4-dimethylaminophenyl)diazenylbenzoate + 2 NADH + 2 H(+). Its function is as follows. Quinone reductase that provides resistance to thiol-specific stress caused by electrophilic quinones. Also exhibits azoreductase activity. Catalyzes the reductive cleavage of the azo bond in aromatic azo compounds to the corresponding amines. In Staphylococcus haemolyticus (strain JCSC1435), this protein is FMN-dependent NADH:quinone oxidoreductase.